Here is a 103-residue protein sequence, read N- to C-terminus: Small ribosomal subunit protein bS18c (103 aa).

Belongs to the bacterial ribosomal protein bS18 family. In terms of assembly, part of the 30S ribosomal subunit.

The protein localises to the plastid. It is found in the chloroplast. This chain is Small ribosomal subunit protein bS18c (rps18), found in Chlorella vulgaris (Green alga).